The primary structure comprises 310 residues: ADP-L-glycero-D-manno-heptose-6-epimerase (310 aa).

NADP(+) is bound by residues 10–11 (FI), 31–32 (DN), K38, K53, 75–79 (EGACS), and N92. The active-site Proton acceptor is the Y140. Residue K144 participates in NADP(+) binding. N169 serves as a coordination point for substrate. Residues V170 and K178 each coordinate NADP(+). K178 functions as the Proton acceptor in the catalytic mechanism. Substrate contacts are provided by residues S180, H187, 201–204 (FSGS), R209, and Y272.

This sequence belongs to the NAD(P)-dependent epimerase/dehydratase family. HldD subfamily. In terms of assembly, homopentamer. NADP(+) is required as a cofactor.

The catalysed reaction is ADP-D-glycero-beta-D-manno-heptose = ADP-L-glycero-beta-D-manno-heptose. Its pathway is nucleotide-sugar biosynthesis; ADP-L-glycero-beta-D-manno-heptose biosynthesis; ADP-L-glycero-beta-D-manno-heptose from D-glycero-beta-D-manno-heptose 7-phosphate: step 4/4. Catalyzes the interconversion between ADP-D-glycero-beta-D-manno-heptose and ADP-L-glycero-beta-D-manno-heptose via an epimerization at carbon 6 of the heptose. In Pectobacterium atrosepticum (strain SCRI 1043 / ATCC BAA-672) (Erwinia carotovora subsp. atroseptica), this protein is ADP-L-glycero-D-manno-heptose-6-epimerase.